The sequence spans 326 residues: Outer capsid glycoprotein VP7 (326 aa).

Residues 1 to 50 (MYGIEYTTFLIYLISIILFNYILKSITRMMDYIIYKFLLIVTIASIVVNA) form the signal peptide. An N-linked (GlcNAc...) asparagine; by host glycan is attached at asparagine 69. Cysteine 82 and cysteine 135 are joined by a disulfide. Residue aspartate 95 coordinates Ca(2+). The N-linked (GlcNAc...) asparagine; by host glycan is linked to asparagine 145. Residues 165 to 167 (CNP) form a CNP motif; interaction with ITGAV/ITGB3 region. 3 cysteine pairs are disulfide-bonded: cysteine 165/cysteine 249, cysteine 191/cysteine 244, and cysteine 196/cysteine 207. Positions 177, 206, 214, 216, 228, 229, and 231 each coordinate Ca(2+). Residues 237–239 (LDV) form an LVD motif; interaction with ITGA4/ITGB1 heterodimer region. The GPR motif; interaction with ITGAX/ITGB2 stretch occupies residues 253–255 (GPR). N-linked (GlcNAc...) asparagine; by host glycosylation occurs at asparagine 270. Aspartate 301 is a Ca(2+) binding site.

It belongs to the rotavirus VP7 family. As to quaternary structure, homotrimer; disulfide-linked. 2 Ca(2+) ions bound at each subunit interface in the trimer hold the trimer together. Interacts with the intermediate capsid protein VP6. Interacts with the outer capsid protein VP5*. In terms of processing, N-glycosylated. Post-translationally, the N-terminus is blocked possibly by pyroglutamic acid.

It localises to the virion. It is found in the host endoplasmic reticulum lumen. Its function is as follows. Calcium-binding protein that interacts with rotavirus cell receptors once the initial attachment by VP4 has been achieved. Rotavirus attachment and entry into the host cell probably involves multiple sequential contacts between the outer capsid proteins VP4 and VP7, and the cell receptors. Following entry into the host cell, low intracellular or intravesicular Ca(2+) concentration probably causes the calcium-stabilized VP7 trimers to dissociate from the virion. This step is probably necessary for the membrane-disrupting entry step and the release of VP4, which is locked onto the virion by VP7. This Bos taurus (Bovine) protein is Outer capsid glycoprotein VP7.